The chain runs to 369 residues: Glycine oxidase (369 aa).

Residues 14–15 (II), 34–35 (ES), 42–43 (AT), 47–49 (AGM), and Val-174 each bind FAD. 2 residues coordinate substrate: Arg-302 and Arg-329. 327–333 (HFRNGIL) contacts FAD.

The protein belongs to the DAO family. ThiO subfamily. As to quaternary structure, homotetramer. It depends on FAD as a cofactor.

The catalysed reaction is glycine + O2 + H2O = glyoxylate + H2O2 + NH4(+). It carries out the reaction glyphosate + O2 + H2O = aminomethylphosphonate + glyoxylate + H2O2 + H(+). The enzyme catalyses N-ethylglycine + O2 + H2O = ethylamine + glyoxylate + H2O2. It catalyses the reaction sarcosine + O2 + H2O = methylamine + glyoxylate + H2O2. The catalysed reaction is D-alanine + O2 + H2O = pyruvate + H2O2 + NH4(+). The protein operates within cofactor biosynthesis; thiamine diphosphate biosynthesis. Functionally, catalyzes the FAD-dependent oxidative deamination of glycine, leading to glyoxylate, ammonia and hydrogen peroxide. Is also able to act on various amines and D-amino acids to yield the corresponding alpha-keto acids, ammonia/amine, and hydrogen peroxide. Can also oxidize the herbicide glyphosate (N-phosphonomethylglycine), and thus may be involved in the degradation pathway that allows B.licheniformis J33-8 to grow with glyphosate as the sole source of carbon. Is essential for thiamine biosynthesis since the oxidation of glycine catalyzed by ThiO generates the glycine imine intermediate (dehydroglycine) required for the biosynthesis of the thiazole ring of thiamine pyrophosphate. This chain is Glycine oxidase, found in Bacillus licheniformis.